The chain runs to 252 residues: 3-dehydroquinate dehydratase (252 aa).

Residues Ser21, Glu46–Arg48, and Arg82 each bind 3-dehydroquinate. Catalysis depends on His143, which acts as the Proton donor/acceptor. Lys170 acts as the Schiff-base intermediate with substrate in catalysis. 3-dehydroquinate is bound by residues Arg213, Ser232, and Gln236.

This sequence belongs to the type-I 3-dehydroquinase family. In terms of assembly, dimer of dimers.

It carries out the reaction 3-dehydroquinate = 3-dehydroshikimate + H2O. It participates in metabolic intermediate biosynthesis; chorismate biosynthesis; chorismate from D-erythrose 4-phosphate and phosphoenolpyruvate: step 3/7. With respect to regulation, inhibited by (2R)-2-methyl-3-dehydroquinic acid. Functionally, involved in the third step of the chorismate pathway, which leads to the biosynthesis of aromatic amino acids. Catalyzes the cis-dehydration of 3-dehydroquinate (DHQ) and introduces the first double bond of the aromatic ring to yield 3-dehydroshikimate. The reaction involves the formation of an imine intermediate between the keto group of 3-dehydroquinate and the epsilon-amino group of Lys-170 at the active site. In Salmonella typhi, this protein is 3-dehydroquinate dehydratase.